The chain runs to 919 residues: TRPM8 channel-associated factor 2 (919 aa).

Positions 542-841 (DCWVSTGLYL…TYLQLQEAFG (300 aa)) constitute a Peptidase M60 domain.

It belongs to the TCAF family. Isoform 2 interacts with TRPM8 (via N-terminus and C-terminus domains); the interaction inhibits TRPM8 channel activity. Interacts with TRPV6. Isoform 2 is expressed in the prostate and in cancerous prostate samples.

It is found in the cell membrane. Negatively regulates the plasma membrane cation channel TRPM8 activity. Involved in the recruitment of TRPM8 to the cell surface. Promotes prostate cancer cell migration stimulation in a TRPM8-dependent manner. This is TRPM8 channel-associated factor 2 from Homo sapiens (Human).